We begin with the raw amino-acid sequence, 228 residues long: UPF0173 metal-dependent hydrolase Dred_1740 (228 aa).

The protein belongs to the UPF0173 family.

The sequence is that of UPF0173 metal-dependent hydrolase Dred_1740 from Desulforamulus reducens (strain ATCC BAA-1160 / DSM 100696 / MI-1) (Desulfotomaculum reducens).